We begin with the raw amino-acid sequence, 375 residues long: N-acetyldiaminopimelate deacetylase (375 aa).

Residue aspartate 69 is part of the active site. Residue glutamate 128 is the Proton acceptor of the active site.

It belongs to the peptidase M20A family. N-acetyldiaminopimelate deacetylase subfamily.

It carries out the reaction N-acetyl-(2S,6S)-2,6-diaminopimelate + H2O = (2S,6S)-2,6-diaminopimelate + acetate. The protein operates within amino-acid biosynthesis; L-lysine biosynthesis via DAP pathway; LL-2,6-diaminopimelate from (S)-tetrahydrodipicolinate (acetylase route): step 3/3. Functionally, catalyzes the conversion of N-acetyl-diaminopimelate to diaminopimelate and acetate. The polypeptide is N-acetyldiaminopimelate deacetylase (Streptococcus suis (strain 05ZYH33)).